Reading from the N-terminus, the 319-residue chain is MKRIAILTSGGDAPGMNAATRAVVRKAIYEGLEVYGINYGFLGLVNGDIRKLELGSVGDLLHRGGTFLYSARYPEFATEEGQLKGIEQLKKHQIDGLVVIGGDGSYHGAEALTKRGFPTIGIPGTIDNDISGTDFTIGFDTALNTVLDALDKIRDTATSHERTFIIEVMGRDAGDIALWSGLAGGAEAIIVPEESFNMDDVVDRLNKGRERGKKHSIIVVAEGVMSGNEFAKQLAEYGDYHARVTVLGHVQRGGSPTAFDRVLASRLGARSVELLLENRGGLAVGIRENRIVENDISEILKEKHTLDQKLFDLASILSI.

Residue Gly-11 participates in ATP binding. 21-25 provides a ligand contact to ADP; it reads RAVVR. Residues 72-73 and 102-105 each bind ATP; these read RY and GDGS. Mg(2+) is bound at residue Asp-103. 125-127 is a substrate binding site; sequence TID. Catalysis depends on Asp-127, which acts as the Proton acceptor. Arg-154 is a binding site for ADP. Substrate contacts are provided by residues Arg-162 and 169-171; that span reads MGR. ADP is bound by residues 185–187, Arg-211, and 213–215; these read GAE and KKH. Residues Glu-222, Arg-243, and 249-252 contribute to the substrate site; that span reads HVQR.

The protein belongs to the phosphofructokinase type A (PFKA) family. ATP-dependent PFK group I subfamily. Prokaryotic clade 'B1' sub-subfamily. As to quaternary structure, homotetramer. Mg(2+) serves as cofactor.

The protein localises to the cytoplasm. It carries out the reaction beta-D-fructose 6-phosphate + ATP = beta-D-fructose 1,6-bisphosphate + ADP + H(+). The protein operates within carbohydrate degradation; glycolysis; D-glyceraldehyde 3-phosphate and glycerone phosphate from D-glucose: step 3/4. With respect to regulation, allosterically activated by ADP and other diphosphonucleosides, and allosterically inhibited by phosphoenolpyruvate. Functionally, catalyzes the phosphorylation of D-fructose 6-phosphate to fructose 1,6-bisphosphate by ATP, the first committing step of glycolysis. This Listeria monocytogenes serotype 4b (strain CLIP80459) protein is ATP-dependent 6-phosphofructokinase.